We begin with the raw amino-acid sequence, 833 residues long: AdoMet-dependent rRNA methyltransferase SPB1 (833 aa).

Positions 59, 61, 79, 95, and 120 each coordinate S-adenosyl-L-methionine. Lys-160 (proton acceptor) is an active-site residue. Coiled coils occupy residues 348–389 (EEEQ…QLNM) and 453–481 (RDEL…SERD). A compositionally biased stretch (basic and acidic residues) spans 477–493 (KSERDAKFRAKQARESS). Disordered stretches follow at residues 477–532 (KSER…SDDD), 592–645 (KRKL…EKHS), and 776–810 (VTKK…GKYK). Composition is skewed to acidic residues over residues 505-532 (QSDE…SDDD) and 622-634 (EDGD…DSEE). The span at 635-645 (EAKRTKQEKHS) shows a compositional bias: basic and acidic residues. The stretch at 730-782 (AEAKARKKHRAVARLEKLKKKAGLINDDSDKSEKDKAEEIAKLMRKVTKKAKQ) forms a coiled coil.

The protein belongs to the class I-like SAM-binding methyltransferase superfamily. RNA methyltransferase RlmE family. SPB1 subfamily. Component of the nucleolar and nucleoplasmic pre-60S ribosomal particle.

Its subcellular location is the nucleus. The protein resides in the nucleolus. The enzyme catalyses a ribonucleotide in rRNA + S-adenosyl-L-methionine = a 2'-O-methylribonucleotide in rRNA + S-adenosyl-L-homocysteine + H(+). Its function is as follows. Required for proper assembly of pre-ribosomal particles during the biogenesis of the 60S ribosomal subunit. The sequence is that of AdoMet-dependent rRNA methyltransferase SPB1 from Kluyveromyces lactis (strain ATCC 8585 / CBS 2359 / DSM 70799 / NBRC 1267 / NRRL Y-1140 / WM37) (Yeast).